Here is a 66-residue protein sequence, read N- to C-terminus: uncharacterized protein (66 aa).

This is an uncharacterized protein from Escherichia coli O157:H7.